A 290-amino-acid polypeptide reads, in one-letter code: 4-hydroxybenzoate octaprenyltransferase (290 aa).

The next 8 helical transmembrane spans lie at 23-43 (IGALLLLWPTLWALWVATPGV), 46-66 (LWILAVFVAGVWLMRAAGCVV), 99-119 (LFVVLVLISFLLVLTLNTMTI), 141-161 (LPQVVLGAAFGWSIPMAFAAV), 163-183 (ESVPLSCWLMFLANILWAVAY), 213-233 (LIIGIFQIGVLALMAIIGELN), 234-254 (GLGWGYYWSILVAGALFVYQQ), and 268-288 (AFMNNNYVGLVLFLGLAMSYW).

It belongs to the UbiA prenyltransferase family. Mg(2+) is required as a cofactor.

It localises to the cell inner membrane. It catalyses the reaction all-trans-octaprenyl diphosphate + 4-hydroxybenzoate = 4-hydroxy-3-(all-trans-octaprenyl)benzoate + diphosphate. Its pathway is cofactor biosynthesis; ubiquinone biosynthesis. Catalyzes the prenylation of para-hydroxybenzoate (PHB) with an all-trans polyprenyl group. Mediates the second step in the final reaction sequence of ubiquinone-8 (UQ-8) biosynthesis, which is the condensation of the polyisoprenoid side chain with PHB, generating the first membrane-bound Q intermediate 3-octaprenyl-4-hydroxybenzoate. The protein is 4-hydroxybenzoate octaprenyltransferase of Escherichia coli (strain UTI89 / UPEC).